Reading from the N-terminus, the 406-residue chain is Phosphopentomutase (406 aa).

Mn(2+) is bound by residues Asp10, Asp305, His310, Asp346, His347, and His358.

Belongs to the phosphopentomutase family. Mn(2+) is required as a cofactor.

The protein localises to the cytoplasm. The catalysed reaction is 2-deoxy-alpha-D-ribose 1-phosphate = 2-deoxy-D-ribose 5-phosphate. It carries out the reaction alpha-D-ribose 1-phosphate = D-ribose 5-phosphate. The protein operates within carbohydrate degradation; 2-deoxy-D-ribose 1-phosphate degradation; D-glyceraldehyde 3-phosphate and acetaldehyde from 2-deoxy-alpha-D-ribose 1-phosphate: step 1/2. Isomerase that catalyzes the conversion of deoxy-ribose 1-phosphate (dRib-1-P) and ribose 1-phosphate (Rib-1-P) to deoxy-ribose 5-phosphate (dRib-5-P) and ribose 5-phosphate (Rib-5-P), respectively. In Rhizobium meliloti (strain 1021) (Ensifer meliloti), this protein is Phosphopentomutase.